Reading from the N-terminus, the 688-residue chain is Sodium channel and clathrin linker 1 (688 aa).

Position 2 is an N-acetylalanine (Ala2). Residues 69–673 (ELNGQLKYYQ…SASQQLSVIT (605 aa)) adopt a coiled-coil conformation. Position 681 is a phosphoserine (Ser681).

As to quaternary structure, interacts with SCN10A and clathrin. Identified in a complex containing SCN10A, clathrin and SCLT1.

It is found in the cytoplasm. It localises to the cytoskeleton. Its subcellular location is the microtubule organizing center. The protein localises to the centrosome. The protein resides in the centriole. Adapter protein that links SCN10A to clathrin. Regulates SCN10A channel activity, possibly by promoting channel internalization. In Homo sapiens (Human), this protein is Sodium channel and clathrin linker 1 (SCLT1).